Reading from the N-terminus, the 314-residue chain is Protein YdgH (314 aa).

Residues 1–19 (MKLKNTLLASALLSAMAFS) form the signal peptide.

To E.coli YjfY.

The polypeptide is Protein YdgH (ydgH) (Escherichia coli (strain K12)).